The sequence spans 330 residues: uncharacterized protein (330 aa).

This is an uncharacterized protein from Archaeoglobus fulgidus (strain ATCC 49558 / DSM 4304 / JCM 9628 / NBRC 100126 / VC-16).